Consider the following 905-residue polypeptide: Alanine--tRNA ligase (905 aa).

Zn(2+) is bound by residues His595, His599, Cys696, and His700.

Belongs to the class-II aminoacyl-tRNA synthetase family. The cofactor is Zn(2+).

The protein resides in the cytoplasm. It carries out the reaction tRNA(Ala) + L-alanine + ATP = L-alanyl-tRNA(Ala) + AMP + diphosphate. Catalyzes the attachment of alanine to tRNA(Ala) in a two-step reaction: alanine is first activated by ATP to form Ala-AMP and then transferred to the acceptor end of tRNA(Ala). Also edits incorrectly charged Ser-tRNA(Ala) and Gly-tRNA(Ala) via its editing domain. The chain is Alanine--tRNA ligase from Anaeromyxobacter dehalogenans (strain 2CP-C).